An 808-amino-acid polypeptide reads, in one-letter code: MDSTNVTTDPNLRPRRGGLQRRFAIIEPALQPDTVTDKIGKDGRVVSLKSNYANFNIKVEGPFYMYDVVMENKSIRTKLELLLAYANSKNNGQPFCFDGRRLFTTSKWHSDEDTENLVIKDVEISIRLLTTFLKNSEEYYQMINIVFNNIQIFMGQEKIGRQFFLGSNCESGGIREGPSFFKMDNFKILGGYSTTITRGTNENGTASTLLYLERINRVLNENNVVSVYRRDQIDQLIGRDIITKYNNKTYRISDIKEMDVNDEVQLGDKKISYLNYFKQRYNINLKNDKQPFVISRVKRSMVRPKEKTENEPEGPTETDQSLSIPGELCYLCGFSDSERSNINLQKNLGTVLKREPRERLNDIRDFCKWTGAGKSKDYMKSWGMCIEEQPITIRGRELAPVDIFSNEVKINTKIPDDWKFGEIKFDVPKGTAHRFGVLVVDRNPSHFNNFIEDVKREIGRLRINYTMDSISSCRSNEVEDALTDFIRVSKVHMALVFIPDDKVYAKVKNFTMSTGLLTQCVTQRNGSNRDDRRRKTVADKSVMQMFSKLGYDPWGINLKMAPTMIVGLDTFHSKTGKRSVQASVFSISAKFSQYISFVNSSKGKNEFHENLGKNFLTALTTFQNKFNTMPLRLIIYRDGVGDSQLAFTKKFETDAVMKMIEKIYENQTLPQIIYVVVKKRISVKFFKDGANPNPGTVVDEKIVKPNFYEFYLVSQKTTKGTASPTNYNVLMDTKFTNKKTNEVSVMSPSVLQQITYSLTHLYFNWMGTIRVPVPTHYAHRLAELVGKIHRGVTPPAINDRIRERLFYL.

Positions 214-333 constitute a PAZ domain; sequence RINRVLNENN…IPGELCYLCG (120 aa). Residues 300 to 322 are disordered; sequence SMVRPKEKTENEPEGPTETDQSL. One can recognise a Piwi domain in the interval 492–790; sequence HMALVFIPDD…LAELVGKIHR (299 aa).

This sequence belongs to the argonaute family. Piwi subfamily. In terms of tissue distribution, expressed in dividing adult somatic stem cells (neoblasts).

This chain is Piwi-like protein 1 (wi-1), found in Schmidtea mediterranea (Freshwater planarian flatworm).